The sequence spans 42 residues: Crotamine Ile-19 (42 aa).

3 disulfide bridges follow: Cys-4/Cys-36, Cys-11/Cys-30, and Cys-18/Cys-37.

The protein belongs to the crotamine-myotoxin family. Monomer. As to expression, expressed by the venom gland.

It is found in the secreted. In terms of biological role, cationic peptide that possesses multiple functions. It acts as a cell-penetrating peptide (CPP), and as a potent voltage-gated potassium channel (Kv) inhibitor, it induces severe muscle necrosis by a non-enzymatic mechanism and exhibits antimicrobial activities. It also elicits a short-lasting hyperextension of the hind limb. It does not cause observable tissue damage (whereas the whole venom causes severe myonecrosis accompanied by edema and hemorrhage). The protein is Crotamine Ile-19 of Crotalus durissus ruruima (South American rattlesnake).